Consider the following 3008-residue polypeptide: Genome polyprotein (3008 aa).

Residue Ser2 is modified to N-acetylserine; by host. Residues 2-23 (STNPKPQRKTKRNTNRRPMDVK) form an interaction with STAT1 region. The interval 2–58 (STNPKPQRKTKRNTNRRPMDVKFPGGGQIVGGVYLLPRRGPRLGVRATRKTSERSQP) is interaction with EIF2AK2/PKR. An interaction with DDX3X region spans residues 2 to 59 (STNPKPQRKTKRNTNRRPMDVKFPGGGQIVGGVYLLPRRGPRLGVRATRKTSERSQPR). The interval 2–75 (STNPKPQRKT…PKARRPEGRS (74 aa)) is disordered. Residues 2–168 (STNPKPQRKT…EDGINYATGN (167 aa)) are Cytoplasmic-facing. 2 consecutive short sequence motifs (nuclear localization signal) follow at residues 5 to 13 (PKPQRKTKR) and 38 to 43 (PRRGPR). Basic residues predominate over residues 7-16 (PQRKTKRNTN). A compositionally biased stretch (low complexity) spans 32-47 (GGVYLLPRRGPRLGVR). Residue Ser53 is modified to Phosphoserine; by host. 2 short sequence motifs (nuclear localization signal) span residues 58-64 (PRGRRQP) and 66-71 (PKARRP). Basic residues predominate over residues 58–68 (PRGRRQPIPKA). Phosphoserine; by host occurs at positions 99 and 116. Residues 112-152 (PRGRSRNLGKVIDTLTCGFADLMGYIPLVGAPVGSVARALA) are important for endoplasmic reticulum and mitochondrial localization. Residues 122 to 173 (VIDTLTCGFADLMGYIPLVGAPVGSVARALAHGVRALEDGINYATGNLPGCS) form an interaction with APOA2 region. The segment at 164 to 167 (YATG) is important for lipid droplets localization. Residues 169–189 (LPGCSFSIFLLALLSCLTVPA) form a helical membrane-spanning segment. Positions 178-191 (LLALLSCLTVPASA) are cleaved as a propeptide — ER anchor for the core protein, removed in mature form by host signal peptidase. Topologically, residues 190-358 (SAVNYRNVSG…SGGHWGVLVG (169 aa)) are lumenal. N-linked (GlcNAc...) asparagine; by host glycans are attached at residues Asn196, Asn209, and Asn234. The interval 265 to 296 (MVGAATVCSGLYIGDLCGGLFLVGQMFSFRPR) is important for fusion. N-linked (GlcNAc...) asparagine; by host glycosylation occurs at Asn305. The helical transmembrane segment at 359-379 (VAYFSMQANWAKVILVLFLFA) threads the bilayer. The Lumenal portion of the chain corresponds to 380–725 (GVDAETHVSG…WEYVVLAFLL (346 aa)). Positions 385–412 (THVSGAAVGRSTAGLANLFSSGSKQNLQ) are HVR1. N-linked (GlcNAc...) (high mannose) asparagine; by host glycosylation is found at Asn417, Asn423, and Asn430. Cystine bridges form between Cys429-Cys553, Cys452-Cys459, Cys487-Cys495, and Cys504-Cys509. Asn448 is a glycosylation site (N-linked (GlcNAc...) asparagine; by host). The interval 475 to 479 (ANISG) is HVR2. Residue Asn476 is glycosylated (N-linked (GlcNAc...) asparagine; by host). A CD81-binding 1 region spans residues 481–494 (SDDRPYCWHYAPRP). Residue Asn533 is glycosylated (N-linked (GlcNAc...) asparagine; by host). The CD81-binding 2 stretch occupies residues 545–552 (PPHGAWFG). Asn557 carries N-linked (GlcNAc...) asparagine; by host glycosylation. 4 cysteine pairs are disulfide-bonded: Cys565-Cys570, Cys581-Cys585, Cys597-Cys620, and Cys607-Cys644. N-linked (GlcNAc...) (high mannose) asparagine; by host glycans are attached at residues Asn623 and Asn645. A disulfide bridge connects residues Cys652 and Cys677. Residues 660 to 671 (VELSPLLLTTTA) form a PKR/eIF2-alpha phosphorylation homology domain (PePHD) region. Residues 726–746 (LADARVSAYLWMMFMVSQVEA) traverse the membrane as a helical segment. The Lumenal portion of the chain corresponds to 747–757 (ALSNLININAA). Residues 758–778 (SAAGAQGFWYAILFICIVWHV) form a helical membrane-spanning segment. At 779-782 (KGRF) the chain is on the cytoplasmic side. A helical transmembrane segment spans residues 783–803 (PAAAAYAACGLWPCFLLLLML). The Lumenal portion of the chain corresponds to 804 to 813 (PERAYAYDQE). Residues 814-834 (VAGSLGGAIVVMLTILTLSPH) traverse the membrane as a helical segment. Topologically, residues 835-881 (YKLWLARGLWWIQYFIARTEAVLHVYIPSFNVRGPRDSVIVLAVLVC) are cytoplasmic. The chain crosses the membrane as a helical span at residues 882–902 (PDLVFDITKYLLAILGPLHIL). Topologically, residues 903-928 (QASLLRIPYFVRAQALVKICSLLRGV) are lumenal. A Peptidase C18 domain is found at 903–1026 (QASLLRIPYF…TETSKGWRLL (124 aa)). The segment at 904–1206 (ASLLRIPYFV…PVESLETTMR (303 aa)) is protease NS2-3. Cys922 carries the S-palmitoyl cysteine; by host lipid modification. A helical transmembrane segment spans residues 929–949 (VYGKYFQMVVLKSRGLTGTYI). Residues 929-949 (VYGKYFQMVVLKSRGLTGTYI) form an interaction with host SCPS1 region. Residues 950–1657 (YDHLTPMSDW…CMSADLEVVT (708 aa)) lie on the Cytoplasmic side of the membrane. Active-site for protease NS2 activity; shared with dimeric partner residues include His952, Glu972, and Cys993. Residues 1027–1208 (APITAYAQQT…ESLETTMRSP (182 aa)) form the Peptidase S29 domain. Residues His1083 and Asp1107 each act as charge relay system; for serine protease NS3 activity in the active site. Zn(2+) is bound by residues Cys1123 and Cys1125. Ser1165 (charge relay system; for serine protease NS3 activity) is an active-site residue. Positions 1171 and 1175 each coordinate Zn(2+). Residues 1217–1369 (PAVPQTYQVA…SNIEEVALPT (153 aa)) enclose the Helicase ATP-binding domain. 1230–1237 (APTGSGKS) provides a ligand contact to ATP. Residues Ser1237 and Glu1317 each contribute to the Mg(2+) site. Positions 1316–1319 (DECY) match the DECH box motif. The segment at 1486 to 1498 (QRRGRTGRGRLGT) is RNA-binding. The chain crosses the membrane as a helical span at residues 1658–1678 (STWVLVGGVLAALAAYCLSVG). An NS3-binding region spans residues 1679 to 1690 (SVVIVGRVVLSG). The Cytoplasmic portion of the chain corresponds to 1679-1805 (SVVIVGRVVL…AVTSPLTTQQ (127 aa)). Residues 1806-1826 (TLLFNILGGWVASQIRDSDAS) form a helical membrane-spanning segment. Topologically, residues 1827–1828 (TA) are lumenal. The chain crosses the membrane as a helical span at residues 1829–1849 (FVVSGLAGAAVGSVGLGKILV). Residue Asp1850 is a topological domain, cytoplasmic. The helical transmembrane segment at 1851–1871 (ILPGYGAGVRGAVVTFKIMSG) threads the bilayer. Over 1872 to 1881 (EMPSTEDLVN) the chain is Lumenal. The chain crosses the membrane as a helical span at residues 1882–1902 (LLPAILSPGALVVEVVCPAIL). The Cytoplasmic portion of the chain corresponds to 1903–1972 (RRHVGPGEGA…WINEDCSTPC (70 aa)). Cys1972 carries the S-palmitoyl cysteine; by host lipid modification. The stretch at 1973 to 2002 (AESWLWEVWDWVLHVLSDFKTCLKAKFVPL) is an intramembrane region. The Cytoplasmic portion of the chain corresponds to 2003–2987 (MPGIPLLSWP…YHSMSHARPR (985 aa)). Zn(2+)-binding residues include Cys2029, Cys2031, and Cys2052. Positions 2120–2208 (ELFTEVDGIR…ASSSASQLSP (89 aa)) are FKBP8-binding. Residues 2120 to 2329 (ELFTEVDGIR…PVPSPRRKRT (210 aa)) are transcriptional activation. Residues 2135 to 2139 (PKCKP) are interaction with non-structural protein 4A. Residues 2189-2435 (RLARGSRPSL…ALVTPCAAEE (247 aa)) form an interaction with host SKP2 region. 5 positions are modified to phosphoserine; by host: Ser2194, Ser2197, Ser2201, Ser2204, and Ser2207. The tract at residues 2210-2245 (LLQATCTAPHDSPGTDLLEANLLWGSTATRVETDEK) is ISDR. The interval 2210-2272 (LLQATCTAPH…REVSVAAEIL (63 aa)) is interaction with EIF2AK2/PKR. The NS4B-binding stretch occupies residues 2245–2303 (KVIILDSFESCVAEQNDDREVSVAAEILRPTKKFPPALPIWARPDYNPPLTETWKQQDY). The segment at 2296 to 2373 (ETWKQQDYQA…TPTETTDSGP (78 aa)) is V3. The SH3-binding motif lies at 2319–2322 (PPVP). Positions 2324–2332 (PRRKRTVQL) match the Nuclear localization signal motif. Residues 2346 to 2406 (AKTFGQSEPS…DPDLTSDSWS (61 aa)) form a disordered region. A Glycyl lysine isopeptide (Lys-Gly) (interchain with G-Cter in ubiquitin) cross-link involves residue Lys2347. The residue at position 2446 (Ser2446) is a Phosphoserine; by host. The 119-residue stretch at 2631 to 2749 (PMGFSYDTRC…IAESDGVEED (119 aa)) folds into the RdRp catalytic domain. Asp2637, Asp2735, and Asp2736 together coordinate Mg(2+). A helical transmembrane segment spans residues 2988 to 3008 (YLLLCLLILTVGVGIFLLPAR).

Belongs to the hepacivirus polyprotein family. Homooligomer. Interacts with E1 (via C-terminus). Interacts with the non-structural protein 5A. Interacts (via N-terminus) with host STAT1 (via SH2 domain); this interaction results in decreased STAT1 phosphorylation and ubiquitin-mediated proteasome-dependent STAT1 degradation, leading to decreased IFN-stimulated gene transcription. Interacts with host STAT3; this interaction constitutively activates STAT3. Interacts with host LTBR receptor. Interacts with host TNFRSF1A receptor and possibly induces apoptosis. Interacts with host HNRPK. Interacts with host YWHAE. Interacts with host UBE3A/E6AP. Interacts with host DDX3X. Interacts with host APOA2. Interacts with host RXRA protein. Interacts with host SP110 isoform 3/Sp110b; this interaction sequesters the transcriptional corepressor SP110 away from the nucleus. Interacts with host CREB3 nuclear transcription protein; this interaction triggers cell transformation. Interacts with host ACY3. Interacts with host C1QR1. Interacts with host RBM24; this interaction, which enhances the interaction of the mature core protein with 5'-UTR, may inhibit viral translation and favor replication. Interacts with host EIF2AK2/PKR; this interaction induces the autophosphorylation of EIF2AK2. Part of the viral assembly initiation complex composed of NS2, E1, E2, NS3, NS4A, NS5A and the mature core protein. As to quaternary structure, forms a heterodimer with envelope glycoprotein E2. Interacts with mature core protein. Interacts with protease NS2. The heterodimer E1/E2 interacts with host CLDN1; this interaction plays a role in viral entry into host cell. Interacts with host SPSB2 (via C-terminus). Part of the viral assembly initiation complex composed of NS2, E1, E2, NS3, NS4A, NS5A and the mature core protein. Interacts with host NEURL3; this interaction prevents E1 binding to glycoprotein E2. In terms of assembly, forms a heterodimer with envelope glycoprotein E1. Interacts with host CD81 and SCARB1 receptors; these interactions play a role in viral entry into host cell. Interacts with host EIF2AK2/PKR; this interaction inhibits EIF2AK2 and probably allows the virus to evade the innate immune response. Interacts with host CD209/DC-SIGN and CLEC4M/DC-SIGNR. Interact with host SPCS1; this interaction is essential for viral particle assembly. Interacts with protease NS2. The heterodimer E1/E2 interacts with host CLDN1; this interaction plays a role in viral entry into host cell. Part of the viral assembly initiation complex composed of NS2, E1, E2, NS3, NS4A, NS5A and the mature core protein. Interacts with host SLC3A2/4F2hc; the interaction may facilitate viral entry into host cell. Interacts with human PLSCR1. Homohexamer. Homoheptamer. Interacts with protease NS2. As to quaternary structure, homodimer. Interacts with host SPCS1; this interaction is essential for viral particle assembly. Interacts with envelope glycoprotein E1. Interacts with envelope glycoprotein E2. Interacts with viroporin p7. Interacts with serine protease/helicase NS3. Part of the replication complex composed of NS2, NS3, NS4A, NS4B, NS5A and the RNA-directed RNA polymerase embedded in an ER-derived membranous web. Part of the viral assembly initiation complex composed of NS2, E1, E2, NS3, NS4A, NS5A and the mature core protein. In terms of assembly, interacts with protease NS2. Interacts with non-structural protein 4A; this interaction stabilizes the folding of NS3 serine protease. NS3-NS4A interaction is essential for NS3 activation and allows membrane anchorage of the latter. NS3/NS4A complex also prevents phosphorylation of host IRF3, thus preventing the establishment of dsRNA induced antiviral state. Interacts with host MAVS; this interaction leads to the cleavage and inhibition of host MAVS. Interacts with host TICAM1; this interaction leads to the cleavage and inhibition of host TICAM1. Interacts with host TANK-binding kinase/TBK1; this interaction results in the inhibition of the association between TBK1 and IRF3, which leads to the inhibition of IRF3 activation. Interacts with host RBM24. Part of the replication complex composed of NS2, NS3, NS4A, NS4B, NS5A and the RNA-directed RNA polymerase embedded in an ER-derived membranous web. Part of the viral assembly initiation complex composed of NS2, E1, E2, NS3, NS4A, NS5A and the mature core protein. Interacts with NS3 serine protease; this interaction stabilizes the folding of NS3 serine protease. NS3-NS4A interaction is essential for NS3 activation and allows membrane anchorage of the latter. Interacts with non-structural protein 5A (via N-terminus). Part of the replication complex composed of NS2, NS3, NS4A, NS4B, NS5A and the RNA-directed RNA polymerase embedded in an ER-derived membranous web. Part of the viral assembly initiation complex composed of NS2, E1, E2, NS3, NS4A, NS5A and the mature core protein. As to quaternary structure, homomultimer. Interacts with non-structural protein NS5A. Interacts with host PLA2G4C; this interaction likely initiates the recruitment of replication complexes to lipid droplets. Interacts with host STING; this interaction disrupts the interaction between STING and TBK1 thereby suppressing the interferon signaling. Part of the replication complex composed of NS2, NS3, NS4A, NS4B, NS5A and the RNA-directed RNA polymerase embedded in an ER-derived membranous web. In terms of assembly, monomer. Homodimer; dimerization is required for RNA-binding. Interacts with the mature core protein. Interacts (via N-terminus) with non-structural protein 4A. Interacts with non-structural protein 4B. Interacts (via region D2) with RNA-directed RNA polymerase. Part of the viral assembly initiation complex composed of NS2, E1, E2, NS3, NS4A, NS5A and the mature core protein. Part of the replication complex composed of NS2, NS3, NS4A, NS4B, NS5A and the RNA-directed RNA polymerase embedded in an ER-derived membranous web. Interacts with host GRB2. Interacts with host BIN1. Interacts with host PIK3R1. Interacts with host SRCAP. Interacts with host FKBP8. Interacts (via C-terminus) with host VAPB (via MSP domain). Interacts with host EIF2AK2/PKR; this interaction leads to disruption of EIF2AK2 dimerization by NS5A and probably allows the virus to evade the innate immune response. Interacts (via N-terminus) with host PACSIN2 (via N-terminus); this interaction attenuates protein kinase C alpha-mediated phosphorylation of PACSIN2 by disrupting the interaction between PACSIN2 and PRKCA. Interacts (via N-terminus) with host SRC kinase (via SH2 domain). Interacts with most Src-family kinases. Interacts with host IFI27 and SKP2; promotes the ubiquitin-mediated proteasomal degradation of NS5A. Interacts with host GPS2. Interacts with host TNFRSF21; this interaction allows the modulation by the virus of JNK, p38 MAPK, STAT3, and Akt signaling pathways in a DR6-dependent manner. Interacts (via N-terminus) with host CIDEB (via N-terminus); this interaction seems to regulate the association of HCV particles with APOE. Interacts with host CHKA/Choline Kinase-alpha; CHKA bridges host PI4KA and NS5A and potentiates NS5A-stimulated PI4KA activity, which then facilitates the targeting of the ternary complex to the ER for viral replication. Interacts with host SPSB2 (via C-terminus); this interaction targets NS5A for ubiquitination and degradation. Interacts with host RAB18; this interaction may promote the association of NS5A and other replicase components with lipid droplets. Interacts (via region D2) with host PPIA/CYPA; the interaction stimulates RNA-binding ability of NS5A and is dependent on the peptidyl-prolyl cis-trans isomerase activity of PPIA/CYPA. Interacts with host TRIM14; this interaction induces the degradation of NS5A. Homooligomer. Interacts with non-structural protein 5A. Interacts with host VAPB. Interacts with host PRK2/PKN2. Interacts with host HNRNPA1 and SEPT6; these interactions facilitate viral replication. Part of the replication complex composed of NS2, NS3, NS4A, NS4B, NS5A and the RNA-directed RNA polymerase. Zn(2+) serves as cofactor. It depends on Mg(2+) as a cofactor. Specific enzymatic cleavages in vivo yield mature proteins. The structural proteins, core, E1, E2 and p7 are produced by proteolytic processing by host signal peptidases. The core protein precursor is synthesized as a 23 kDa, which is retained in the ER membrane through the hydrophobic signal peptide. Cleavage by the signal peptidase releases the 21 kDa mature core protein. The cleavage of the core protein precursor occurs between aminoacids 176 and 188 but the exact cleavage site is not known. Some degraded forms of the core protein appear as well during the course of infection. The other proteins (p7, NS2, NS3, NS4A, NS4B, NS5A and NS5B) are cleaved by the viral proteases. Autoprocessing between NS2 and NS3 is mediated by the NS2 cysteine protease catalytic domain and regulated by the NS3 N-terminal domain. In terms of processing, phosphorylated by host PKC and PKA. Post-translationally, ubiquitinated; mediated by UBE3A and leading to core protein subsequent proteasomal degradation. Highly N-glycosylated. In terms of processing, palmitoylation is required for NS2/3 autoprocessing and E2 recruitment to membranes. Post-translationally, palmitoylated. This modification may play a role in its polymerization or in protein-protein interactions. Phosphorylated on serines in a basal form termed p56. p58 is a hyperphosphorylated form of p56. p56 and p58 coexist in the cell in roughly equivalent amounts. Hyperphosphorylation is dependent on the presence of NS4A. Host CSNK1A1/CKI-alpha or RPS6KB1 kinases may be responsible for NS5A phosphorylation. In terms of processing, tyrosine phosphorylation is essential for the interaction with host SRC. Post-translationally, the N-terminus is phosphorylated by host PRK2/PKN2.

It is found in the host endoplasmic reticulum membrane. Its subcellular location is the host mitochondrion membrane. It localises to the virion. The protein localises to the host cytoplasm. The protein resides in the host nucleus. It is found in the host lipid droplet. Its subcellular location is the virion membrane. It localises to the host mitochondrion. The protein localises to the host cell membrane. The protein resides in the host perinuclear region. It catalyses the reaction Hydrolysis of four peptide bonds in the viral precursor polyprotein, commonly with Asp or Glu in the P6 position, Cys or Thr in P1 and Ser or Ala in P1'.. The enzyme catalyses a ribonucleoside 5'-triphosphate + H2O = a ribonucleoside 5'-diphosphate + phosphate + H(+). The catalysed reaction is ATP + H2O = ADP + phosphate + H(+). It carries out the reaction RNA(n) + a ribonucleoside 5'-triphosphate = RNA(n+1) + diphosphate. With respect to regulation, inhibited by the antiviral drug hexamethylene amiloride. Inhibition by amantadine appears to be genotype-dependent. Also inhibited by long-alkyl-chain iminosugar derivatives. Its activity is regulated as follows. Activity is up-regulated by PRK2/PKN2-mediated phosphorylation. In terms of biological role, packages viral RNA to form a viral nucleocapsid, and promotes virion budding. Participates in the viral particle production as a result of its interaction with the non-structural protein 5A. Binds RNA and may function as a RNA chaperone to induce the RNA structural rearrangements taking place during virus replication. Modulates viral translation initiation by interacting with viral IRES and 40S ribosomal subunit. Affects various cell signaling pathways, host immunity and lipid metabolism. Prevents the establishment of cellular antiviral state by blocking the interferon-alpha/beta (IFN-alpha/beta) and IFN-gamma signaling pathways and by blocking the formation of phosphorylated STAT1 and promoting ubiquitin-mediated proteasome-dependent degradation of STAT1. Activates STAT3 leading to cellular transformation. Regulates the activity of cellular genes, including c-myc and c-fos. May repress the promoter of p53, and sequester CREB3 and SP110 isoform 3/Sp110b in the cytoplasm. Represses cell cycle negative regulating factor CDKN1A, thereby interrupting an important check point of normal cell cycle regulation. Targets transcription factors involved in the regulation of inflammatory responses and in the immune response: suppresses TNF-induced NF-kappa-B activation, and activates AP-1. Binds to dendritic cells (DCs) via C1QR1, resulting in down-regulation of T-lymphocytes proliferation. Alters lipid metabolism by interacting with hepatocellular proteins involved in lipid accumulation and storage. Induces up-regulation of FAS promoter activity, and thereby contributes to the increased triglyceride accumulation in hepatocytes (steatosis). Its function is as follows. Forms a heterodimer with envelope glycoprotein E2, which mediates virus attachment to the host cell, virion internalization through clathrin-dependent endocytosis and fusion with host membrane. Fusion with the host cell is most likely mediated by both E1 and E2, through conformational rearrangements of the heterodimer required for fusion rather than a classical class II fusion mechanism. E1/E2 heterodimer binds host apolipoproteins such as APOB and ApoE thereby forming a lipo-viro-particle (LVP). APOE associated to the LVP allows the initial virus attachment to cell surface receptors such as the heparan sulfate proteoglycans (HSPGs), syndecan-1 (SDC1), syndecan-1 (SDC2), the low-density lipoprotein receptor (LDLR) and scavenger receptor class B type I (SCARB1). The cholesterol transfer activity of SCARB1 allows E2 exposure and binding of E2 to SCARB1 and the tetraspanin CD81. E1/E2 heterodimer binding on CD81 activates the epithelial growth factor receptor (EGFR) signaling pathway. Diffusion of the complex E1-E2-EGFR-SCARB1-CD81 to the cell lateral membrane allows further interaction with Claudin 1 (CLDN1) and occludin (OCLN) to finally trigger HCV entry. Forms a heterodimer with envelope glycoprotein E1, which mediates virus attachment to the host cell, virion internalization through clathrin-dependent endocytosis and fusion with host membrane. Fusion with the host cell is most likely mediated by both E1 and E2, through conformational rearrangements of the heterodimer required for fusion rather than a classical class II fusion mechanism. The interaction between envelope glycoprotein E2 and host apolipoprotein E/APOE allows the proper assembly, maturation and infectivity of the viral particles. This interaction is probably promoted via the up-regulation of cellular autophagy by the virus. E1/E2 heterodimer binds host apolipoproteins such as APOB and APOE thereby forming a lipo-viro-particle (LVP). APOE associated to the LVP allows the initial virus attachment to cell surface receptors such as the heparan sulfate proteoglycans (HSPGs), syndecan-1 (SDC1), syndecan-1 (SDC2), the low-density lipoprotein receptor (LDLR) and scavenger receptor class B type I (SCARB1). The cholesterol transfer activity of SCARB1 allows E2 exposure and binding of E2 to SCARB1 and the tetraspanin CD81. E1/E2 heterodimer binding on CD81 activates the epithelial growth factor receptor (EGFR) signaling pathway. Diffusion of the complex E1-E2-EGFR-SCARB1-CD81 to the cell lateral membrane allows further interaction with Claudin 1 (CLDN1) and occludin (OCLN) to finally trigger HCV entry. Inhibits host EIF2AK2/PKR activation, preventing the establishment of an antiviral state. Viral ligand for CD209/DC-SIGN and CLEC4M/DC-SIGNR, which are respectively found on dendritic cells (DCs), and on liver sinusoidal endothelial cells and macrophage-like cells of lymph node sinuses. These interactions allow the capture of circulating HCV particles by these cells and subsequent facilitated transmission to permissive cells such as hepatocytes and lymphocyte subpopulations. The interaction between E2 and host amino acid transporter complex formed by SLC3A2 and SLC7A5/LAT1 may facilitate viral entry into host cell. Functionally, ion channel protein that acts as a viroporin and plays an essential role in the assembly, envelopment and secretion of viral particles. Regulates the host cell secretory pathway, which induces the intracellular retention of viral glycoproteins and favors assembly of viral particles. Creates a pore in acidic organelles and releases Ca(2+) and H(+) in the cytoplasm of infected cells, leading to a productive viral infection. High levels of cytoplasmic Ca(2+) may trigger membrane trafficking and transport of viral ER-associated proteins to viroplasms, sites of viral genome replication. This ionic imbalance induces the assembly of the inflammasome complex, which triggers the maturation of pro-IL-1beta into IL-1beta through the action of caspase-1. Targets also host mitochondria and induces mitochondrial depolarization. In addition of its role as a viroporin, acts as a lipid raft adhesion factor. In terms of biological role, cysteine protease required for the proteolytic auto-cleavage between the non-structural proteins NS2 and NS3. The N-terminus of NS3 is required for the function of NS2 protease (active region NS2-3). Promotes the initiation of viral particle assembly by mediating the interaction between structural and non-structural proteins. Its function is as follows. Displays three enzymatic activities: serine protease with a chymotrypsin-like fold, NTPase and RNA helicase. NS3 serine protease, in association with NS4A, is responsible for the cleavages of NS3-NS4A, NS4A-NS4B, NS4B-NS5A and NS5A-NS5B. The NS3/NS4A complex prevents phosphorylation of host IRF3, thus preventing the establishment of dsRNA induced antiviral state. The NS3/NS4A complex induces host amino acid transporter component SLC3A2, thus contributing to HCV propagation. NS3 RNA helicase binds to RNA and unwinds both dsDNA and dsRNA in the 3' to 5' direction, and likely resolves RNA complicated stable secondary structures in the template strand. Binds a single ATP and catalyzes the unzipping of a single base pair of dsRNA. Inhibits host antiviral proteins TBK1 and IRF3 thereby preventing the establishment of an antiviral state. Cleaves host MAVS/CARDIF thereby preventing the establishment of an antiviral state. Cleaves host TICAM1/TRIF, thereby disrupting TLR3 signaling and preventing the establishment of an antiviral state. Induces a specific membrane alteration that serves as a scaffold for the virus replication complex. This membrane alteration gives rise to the so-called ER-derived membranous web that contains the replication complex. NS4B self-interaction contributes to its function in membranous web formation. Promotes host TRIF protein degradation in a CASP8-dependent manner thereby inhibiting host TLR3-mediated interferon signaling. Disrupts the interaction between STING and TBK1 contributing to the inhibition of interferon signaling. Functionally, phosphorylated protein that is indispensable for viral replication and assembly. Both hypo- and hyperphosphorylated states are required for the viral life cycle. The hyperphosphorylated form of NS5A is an inhibitor of viral replication. Involved in RNA-binding and especially in binding to the viral genome. Zinc is essential for RNA-binding. Participates in the viral particle production as a result of its interaction with the mature viral core protein. Its interaction with host VAPB may target the viral replication complex to vesicles. Down-regulates viral IRES translation initiation. Mediates interferon resistance, presumably by interacting with and inhibiting host EIF2AK2/PKR. Prevents BIN1-induced apoptosis. Acts as a transcriptional activator of some host genes important for viral replication when localized in the nucleus. Via the interaction with host PACSIN2, modulates lipid droplet formation in order to promote virion assembly. Modulates TNFRSF21/DR6 signaling pathway for viral propagation. In terms of biological role, RNA-dependent RNA polymerase that performs primer-template recognition and RNA synthesis during viral replication. Initiates RNA transcription/replication at a flavin adenine dinucleotide (FAD), resulting in a 5'- FAD cap on viral RNAs. In this way, recognition of viral 5' RNA by host pattern recognition receptors can be bypassed, thereby evading activation of antiviral pathways. The sequence is that of Genome polyprotein from Homo sapiens (Human).